A 403-amino-acid polypeptide reads, in one-letter code: Phosphopentomutase (403 aa).

Mn(2+) contacts are provided by aspartate 13, aspartate 298, histidine 303, aspartate 339, histidine 340, and histidine 351.

It belongs to the phosphopentomutase family. It depends on Mn(2+) as a cofactor.

Its subcellular location is the cytoplasm. The catalysed reaction is 2-deoxy-alpha-D-ribose 1-phosphate = 2-deoxy-D-ribose 5-phosphate. It carries out the reaction alpha-D-ribose 1-phosphate = D-ribose 5-phosphate. It participates in carbohydrate degradation; 2-deoxy-D-ribose 1-phosphate degradation; D-glyceraldehyde 3-phosphate and acetaldehyde from 2-deoxy-alpha-D-ribose 1-phosphate: step 1/2. In terms of biological role, isomerase that catalyzes the conversion of deoxy-ribose 1-phosphate (dRib-1-P) and ribose 1-phosphate (Rib-1-P) to deoxy-ribose 5-phosphate (dRib-5-P) and ribose 5-phosphate (Rib-5-P), respectively. The chain is Phosphopentomutase from Streptococcus pyogenes serotype M3 (strain ATCC BAA-595 / MGAS315).